Reading from the N-terminus, the 256-residue chain is 2,3,4,5-tetrahydropyridine-2,6-dicarboxylate N-acetyltransferase (256 aa).

The protein belongs to the transferase hexapeptide repeat family. DapH subfamily.

The enzyme catalyses (S)-2,3,4,5-tetrahydrodipicolinate + acetyl-CoA + H2O = L-2-acetamido-6-oxoheptanedioate + CoA. It participates in amino-acid biosynthesis; L-lysine biosynthesis via DAP pathway; LL-2,6-diaminopimelate from (S)-tetrahydrodipicolinate (acetylase route): step 1/3. Catalyzes the transfer of an acetyl group from acetyl-CoA to tetrahydrodipicolinate. The polypeptide is 2,3,4,5-tetrahydropyridine-2,6-dicarboxylate N-acetyltransferase (Lactococcus lactis subsp. cremoris (strain MG1363)).